The chain runs to 563 residues: NAD-dependent malic enzyme (563 aa).

Catalysis depends on Tyr-101, which acts as the Proton donor. Arg-154 is a binding site for NAD(+). Catalysis depends on Lys-172, which acts as the Proton acceptor. A divalent metal cation is bound by residues Glu-243, Asp-244, and Asp-267. Asp-267 and Asn-416 together coordinate NAD(+).

The protein belongs to the malic enzymes family. Homotetramer. Requires Mg(2+) as cofactor. The cofactor is Mn(2+).

It catalyses the reaction (S)-malate + NAD(+) = pyruvate + CO2 + NADH. The catalysed reaction is oxaloacetate + H(+) = pyruvate + CO2. This chain is NAD-dependent malic enzyme, found in Pseudomonas syringae pv. syringae (strain B728a).